Here is a 202-residue protein sequence, read N- to C-terminus: uncharacterized protein (202 aa).

The protein belongs to the NAD(P)H dehydrogenase (quinone) family.

This is an uncharacterized protein from Haemophilus influenzae (strain ATCC 51907 / DSM 11121 / KW20 / Rd).